The chain runs to 433 residues: Glutamate-1-semialdehyde 2,1-aminomutase (433 aa).

The residue at position 273 (Lys273) is an N6-(pyridoxal phosphate)lysine.

The protein belongs to the class-III pyridoxal-phosphate-dependent aminotransferase family. HemL subfamily. As to quaternary structure, homodimer. Pyridoxal 5'-phosphate is required as a cofactor.

It is found in the cytoplasm. The enzyme catalyses (S)-4-amino-5-oxopentanoate = 5-aminolevulinate. Its pathway is porphyrin-containing compound metabolism; protoporphyrin-IX biosynthesis; 5-aminolevulinate from L-glutamyl-tRNA(Glu): step 2/2. The chain is Glutamate-1-semialdehyde 2,1-aminomutase from Ralstonia pickettii (strain 12J).